We begin with the raw amino-acid sequence, 148 residues long: Large ribosomal subunit protein uL15 (148 aa).

The interval 1–51 (MNLSNLKPAEGSTKTRKRIGRGPGSGLGGTSTRGHKGAKSRSGYSKKIGFE) is disordered. The segment covering 21 to 31 (RGPGSGLGGTS) has biased composition (gly residues).

It belongs to the universal ribosomal protein uL15 family. As to quaternary structure, part of the 50S ribosomal subunit.

Functionally, binds to the 23S rRNA. In Phocaeicola vulgatus (strain ATCC 8482 / DSM 1447 / JCM 5826 / CCUG 4940 / NBRC 14291 / NCTC 11154) (Bacteroides vulgatus), this protein is Large ribosomal subunit protein uL15.